The chain runs to 348 residues: Mannonate dehydratase (348 aa).

Belongs to the mannonate dehydratase family. Fe(2+) serves as cofactor. It depends on Mn(2+) as a cofactor.

It carries out the reaction D-mannonate = 2-dehydro-3-deoxy-D-gluconate + H2O. Its pathway is carbohydrate metabolism; pentose and glucuronate interconversion. Functionally, catalyzes the dehydration of D-mannonate. In Streptococcus agalactiae serotype V (strain ATCC BAA-611 / 2603 V/R), this protein is Mannonate dehydratase.